A 699-amino-acid chain; its full sequence is Elongation factor G (699 aa).

The tr-type G domain maps to 10–292 (NRTRNIGIMA…AVIDYLPSPT (283 aa)). GTP contacts are provided by residues 19–26 (AHIDAGKT), 90–94 (DTPGH), and 144–147 (NKMD). The interval 292–312 (TDVPAIRGEEDDGSEGSRSAS) is disordered.

The protein belongs to the TRAFAC class translation factor GTPase superfamily. Classic translation factor GTPase family. EF-G/EF-2 subfamily.

It is found in the cytoplasm. In terms of biological role, catalyzes the GTP-dependent ribosomal translocation step during translation elongation. During this step, the ribosome changes from the pre-translocational (PRE) to the post-translocational (POST) state as the newly formed A-site-bound peptidyl-tRNA and P-site-bound deacylated tRNA move to the P and E sites, respectively. Catalyzes the coordinated movement of the two tRNA molecules, the mRNA and conformational changes in the ribosome. The chain is Elongation factor G from Coxiella burnetii (strain CbuG_Q212) (Coxiella burnetii (strain Q212)).